The primary structure comprises 36 residues: Photosystem I reaction center subunit VIII (36 aa).

Residues 9–29 (ISVPLVGLVFPAITMVLSFIY) form a helical membrane-spanning segment.

It belongs to the PsaI family.

The protein localises to the plastid. It localises to the chloroplast thylakoid membrane. In terms of biological role, may help in the organization of the PsaL subunit. This chain is Photosystem I reaction center subunit VIII, found in Huperzia lucidula (Shining clubmoss).